A 344-amino-acid polypeptide reads, in one-letter code: N-acetyl-gamma-glutamyl-phosphate reductase (344 aa).

The active site involves C150.

The protein belongs to the NAGSA dehydrogenase family. Type 1 subfamily.

The protein resides in the cytoplasm. The catalysed reaction is N-acetyl-L-glutamate 5-semialdehyde + phosphate + NADP(+) = N-acetyl-L-glutamyl 5-phosphate + NADPH + H(+). The protein operates within amino-acid biosynthesis; L-arginine biosynthesis; N(2)-acetyl-L-ornithine from L-glutamate: step 3/4. Functionally, catalyzes the NADPH-dependent reduction of N-acetyl-5-glutamyl phosphate to yield N-acetyl-L-glutamate 5-semialdehyde. The chain is N-acetyl-gamma-glutamyl-phosphate reductase from Ectopseudomonas mendocina (strain ymp) (Pseudomonas mendocina).